Consider the following 311-residue polypeptide: Ribosomal RNA small subunit methyltransferase H (311 aa).

Residues 32 to 34, D52, F78, D99, and Q106 each bind S-adenosyl-L-methionine; that span reads GGH.

The protein belongs to the methyltransferase superfamily. RsmH family.

Its subcellular location is the cytoplasm. The enzyme catalyses cytidine(1402) in 16S rRNA + S-adenosyl-L-methionine = N(4)-methylcytidine(1402) in 16S rRNA + S-adenosyl-L-homocysteine + H(+). In terms of biological role, specifically methylates the N4 position of cytidine in position 1402 (C1402) of 16S rRNA. The sequence is that of Ribosomal RNA small subunit methyltransferase H from Halothermothrix orenii (strain H 168 / OCM 544 / DSM 9562).